Reading from the N-terminus, the 157-residue chain is Transcription elongation factor GreA (157 aa).

The protein belongs to the GreA/GreB family.

In terms of biological role, necessary for efficient RNA polymerase transcription elongation past template-encoded arresting sites. The arresting sites in DNA have the property of trapping a certain fraction of elongating RNA polymerases that pass through, resulting in locked ternary complexes. Cleavage of the nascent transcript by cleavage factors such as GreA or GreB allows the resumption of elongation from the new 3'terminus. GreA releases sequences of 2 to 3 nucleotides. This Brucella anthropi (strain ATCC 49188 / DSM 6882 / CCUG 24695 / JCM 21032 / LMG 3331 / NBRC 15819 / NCTC 12168 / Alc 37) (Ochrobactrum anthropi) protein is Transcription elongation factor GreA.